Consider the following 428-residue polypeptide: MIKILDSKNKNFDKTLDALLSKRKNKVQLNSVSVIKIIKDVKKNGDKAILKYEKRFNKNSIIAPSIKQINRAIQSLDQKVKKAIDLAYDRIYKFHSLQKFKNISYTDKLKNKLEYKYVPIESVAIYVPGSTASYPSSVLMNAVPAIVAGVKRLVMVNPGQKGKQNPAVLYAAKKCKIKEIYSIGGPSAIAAVAYGTKKIKKVDKIIGPGNSYVAAAKKEVFGDVGIEGMIAGPSEVTIVCDKFSNPEWIASDLIGQAEHDNLAQCILISKDKSIIKKVNYEIINQLKELPRAVIAKNSLLNNGILIYMPSDQKIINTVNKIAPEHLELNTKNYKKVVSKIKNAGSICLGKYAVMAMTDYNVGSNHVLPTNSSARYSSGVSVNEFYKRISYINLSKKGIETLGPSVITLANYEGLVGHAKSVEKRIRRK.

The substrate site is built by Ser234, Gln256, and His259. Gln256 and His259 together coordinate Zn(2+). Active-site proton acceptor residues include Glu324 and His325. Substrate-binding residues include His325, Asp358, Glu412, and His417. Asp358 contributes to the Zn(2+) binding site. His417 serves as a coordination point for Zn(2+).

The protein belongs to the histidinol dehydrogenase family. The cofactor is Zn(2+).

It carries out the reaction L-histidinol + 2 NAD(+) + H2O = L-histidine + 2 NADH + 3 H(+). It functions in the pathway amino-acid biosynthesis; L-histidine biosynthesis; L-histidine from 5-phospho-alpha-D-ribose 1-diphosphate: step 9/9. Catalyzes the sequential NAD-dependent oxidations of L-histidinol to L-histidinaldehyde and then to L-histidine. The chain is Histidinol dehydrogenase from Pelagibacter ubique (strain HTCC1062).